Consider the following 1076-residue polypeptide: Nickel and cobalt resistance protein CnrA (1076 aa).

12 helical membrane passes run 14-34 (WLVL…LNLL), 366-386 (TVAK…FALL), 390-410 (RAAT…AIGM), 418-438 (NLMS…VIIV), 475-495 (PTVY…TFQG), 502-522 (SPMV…SLTF), 561-581 (PMPF…AFTF), 903-923 (RLAI…YMAI), 928-948 (LTAT…FALL), 959-979 (AVGF…LISA), 1003-1023 (RPVL…AIAT), and 1035-1055 (TVVI…LPAL).

The protein belongs to the resistance-nodulation-cell division (RND) (TC 2.A.6) family.

It localises to the cell inner membrane. Functionally, the products of the genes cnrA, cnrB, and cnrC are likely to form a membrane-bound protein complex catalyzing an energy-dependent efflux of Ni(2+) and Co(2+). The mechanism of action of the CnrCBA complex may be that of a proton/cation antiporter. This chain is Nickel and cobalt resistance protein CnrA (cnrA), found in Cupriavidus metallidurans (strain ATCC 43123 / DSM 2839 / NBRC 102507 / CH34) (Ralstonia metallidurans).